The following is a 1035-amino-acid chain: Cell-division control histidine kinase PdhS (1035 aa).

The tract at residues 1–613 (MSGSYPFIDI…HADGSEEPVD (613 aa)) is important for polar localization. The interval 500–533 (QGLANTRAESETPVSETSSIEPVEPTPPVKTRSE) is disordered. The segment at 614–1035 (AHLNAIAWRG…VFPPTRVLAD (422 aa)) is interaction with DivK. A PAS domain is found at 659–730 (HVEELKTILD…YLHGLSGNGV (72 aa)). The Histidine kinase domain maps to 802–1031 (RISHEIRTPL…VVEIVFPPTR (230 aa)). A Phosphohistidine; by autocatalysis modification is found at His-805.

As to quaternary structure, interacts with DivK.

The protein localises to the cytoplasm. It catalyses the reaction ATP + protein L-histidine = ADP + protein N-phospho-L-histidine.. Its function is as follows. Functions as a polar differentiation marker. Essential protein that, by localizing in the old pole of dividing cells, controls cell division and maturation, probably through control of DivK phosphorylation status and cellular distribution, which in turn regulates CtrA, a transcriptional regulator of the minB operon. The asymmetrical localization of this protein is probably required for cells to enter a new division cycle. This chain is Cell-division control histidine kinase PdhS (pdhS), found in Brucella canis (strain ATCC 23365 / NCTC 10854 / RM-666).